We begin with the raw amino-acid sequence, 236 residues long: 5'-methylthioadenosine/S-adenosylhomocysteine nucleosidase (236 aa).

Glutamate 12 serves as the catalytic Proton acceptor. Residues glycine 78, isoleucine 153, and 174–175 (ME) each bind substrate. The active-site Proton donor is the aspartate 198.

The protein belongs to the PNP/UDP phosphorylase family. MtnN subfamily.

The enzyme catalyses S-adenosyl-L-homocysteine + H2O = S-(5-deoxy-D-ribos-5-yl)-L-homocysteine + adenine. The catalysed reaction is S-methyl-5'-thioadenosine + H2O = 5-(methylsulfanyl)-D-ribose + adenine. It catalyses the reaction 5'-deoxyadenosine + H2O = 5-deoxy-D-ribose + adenine. It functions in the pathway amino-acid biosynthesis; L-methionine biosynthesis via salvage pathway; S-methyl-5-thio-alpha-D-ribose 1-phosphate from S-methyl-5'-thioadenosine (hydrolase route): step 1/2. In terms of biological role, catalyzes the irreversible cleavage of the glycosidic bond in both 5'-methylthioadenosine (MTA) and S-adenosylhomocysteine (SAH/AdoHcy) to adenine and the corresponding thioribose, 5'-methylthioribose and S-ribosylhomocysteine, respectively. Also cleaves 5'-deoxyadenosine, a toxic by-product of radical S-adenosylmethionine (SAM) enzymes, into 5-deoxyribose and adenine. The sequence is that of 5'-methylthioadenosine/S-adenosylhomocysteine nucleosidase from Shewanella baltica (strain OS185).